The following is a 484-amino-acid chain: UDP-N-acetylmuramoyl-L-alanyl-D-glutamate--2,6-diaminopimelate ligase (484 aa).

Serine 30 provides a ligand contact to UDP-N-acetyl-alpha-D-muramoyl-L-alanyl-D-glutamate. Residue 109–115 (GTNGKTS) coordinates ATP. Residues 151–152 (TT), serine 178, and arginine 186 contribute to the UDP-N-acetyl-alpha-D-muramoyl-L-alanyl-D-glutamate site. Lysine 218 is subject to N6-carboxylysine. Meso-2,6-diaminopimelate-binding positions include arginine 379, 403–406 (DNPR), glycine 455, and glutamate 459. Positions 403–406 (DNPR) match the Meso-diaminopimelate recognition motif motif.

Belongs to the MurCDEF family. MurE subfamily. Mg(2+) serves as cofactor. Carboxylation is probably crucial for Mg(2+) binding and, consequently, for the gamma-phosphate positioning of ATP.

Its subcellular location is the cytoplasm. It carries out the reaction UDP-N-acetyl-alpha-D-muramoyl-L-alanyl-D-glutamate + meso-2,6-diaminopimelate + ATP = UDP-N-acetyl-alpha-D-muramoyl-L-alanyl-gamma-D-glutamyl-meso-2,6-diaminopimelate + ADP + phosphate + H(+). It participates in cell wall biogenesis; peptidoglycan biosynthesis. Functionally, catalyzes the addition of meso-diaminopimelic acid to the nucleotide precursor UDP-N-acetylmuramoyl-L-alanyl-D-glutamate (UMAG) in the biosynthesis of bacterial cell-wall peptidoglycan. The sequence is that of UDP-N-acetylmuramoyl-L-alanyl-D-glutamate--2,6-diaminopimelate ligase from Clostridioides difficile (strain 630) (Peptoclostridium difficile).